Reading from the N-terminus, the 350-residue chain is Hydroxymethylglutaryl-CoA synthase (350 aa).

Asp-30 contacts (3S)-3-hydroxy-3-methylglutaryl-CoA. Residue Glu-82 is the Proton donor/acceptor of the active site. The (3S)-3-hydroxy-3-methylglutaryl-CoA site is built by Cys-114, Ser-155, Thr-203, and His-236. Cys-114 acts as the Acyl-thioester intermediate in catalysis. His-236 functions as the Proton donor/acceptor in the catalytic mechanism. A CoA-binding site is contributed by Arg-241. (3S)-3-hydroxy-3-methylglutaryl-CoA is bound by residues Arg-245, Asn-268, and Ser-298.

The protein belongs to the thiolase-like superfamily. Archaeal HMG-CoA synthase family. In terms of assembly, interacts with acetoacetyl-CoA thiolase that catalyzes the precedent step in the pathway and with a DUF35 protein. The acetoacetyl-CoA thiolase/HMG-CoA synthase complex channels the intermediate via a fused CoA-binding site, which allows for efficient coupling of the endergonic thiolase reaction with the exergonic HMGCS reaction.

It carries out the reaction acetoacetyl-CoA + acetyl-CoA + H2O = (3S)-3-hydroxy-3-methylglutaryl-CoA + CoA + H(+). It functions in the pathway metabolic intermediate biosynthesis; (R)-mevalonate biosynthesis; (R)-mevalonate from acetyl-CoA: step 2/3. Its function is as follows. Catalyzes the condensation of acetyl-CoA with acetoacetyl-CoA to form 3-hydroxy-3-methylglutaryl-CoA (HMG-CoA). Functions in the mevalonate (MVA) pathway leading to isopentenyl diphosphate (IPP), a key precursor for the biosynthesis of isoprenoid compounds that are building blocks of archaeal membrane lipids. The protein is Hydroxymethylglutaryl-CoA synthase of Pyrobaculum calidifontis (strain DSM 21063 / JCM 11548 / VA1).